The sequence spans 248 residues: 5'-nucleotidase SurE (248 aa).

A divalent metal cation-binding residues include Asp-8, Asp-9, Ser-39, and Asn-91.

It belongs to the SurE nucleotidase family. A divalent metal cation serves as cofactor.

It localises to the cytoplasm. The enzyme catalyses a ribonucleoside 5'-phosphate + H2O = a ribonucleoside + phosphate. Nucleotidase that shows phosphatase activity on nucleoside 5'-monophosphates. This Geotalea daltonii (strain DSM 22248 / JCM 15807 / FRC-32) (Geobacter daltonii) protein is 5'-nucleotidase SurE.